The chain runs to 1036 residues: Pre-mRNA-processing factor 39-2 (1036 aa).

Positions 1–24 (MVTTEVRTAVSDKEPLQRSPELDS) are disordered. HAT repeat units follow at residues 62 to 94 (DDIEKLCLVYDAFLLEFPLCHGYWRKYAYHKIK), 96 to 128 (CTLEDAVEVFERAVQAATYSVAVWLDYCAFAVA), 131 to 166 (EDPHDVSRLFERGLSFIGKDYSCCTLWDKYIEYLLG), 168 to 201 (QQWSSLANVYLRTLKYPSKKLDLYYKNFRKIAAS), 278 to 310 (CFETQIRRPYFHVKPLDTNQLDNWHAYLSFGET), and 312 to 344 (GDFDWAINLYERCLIPCANYTEFWFRYVDFVES). 3 disordered regions span residues 595–618 (GISSIVDSPPKEKKESSLDSYGTQ), 714–767 (PSGS…PVGT), and 995–1036 (KGDE…ISSI). The span at 714–726 (PSGSQSPQSYQSQ) shows a compositional bias: low complexity. Positions 740-755 (RDLNQMHRDSKPRSQE) are enriched in basic and acidic residues. A compositionally biased stretch (polar residues) spans 1002–1036 (SMPQGSTTNSDIQKSQESGAVNEANLSSDTSISSI).

The protein belongs to the PRP39 family.

The protein localises to the nucleus. In terms of biological role, involved in pre-mRNA splicing. The protein is Pre-mRNA-processing factor 39-2 of Arabidopsis thaliana (Mouse-ear cress).